The following is a 250-amino-acid chain: Proteasome subunit alpha type-7-like (250 aa).

Ser-132 is a glycosylation site (O-linked (GlcNAc) serine).

The protein belongs to the peptidase T1A family. The 26S proteasome consists of a 20S proteasome core and two 19S regulatory subunits. The 20S proteasome core is a barrel-shaped complex made of 28 subunits that are arranged in four stacked rings. The two outer rings are each formed by seven alpha subunits, and the two inner rings are formed by seven beta subunits. The proteolytic activity is exerted by three beta-subunits PSMB5, PSMB6 and PSMB7. PSMA7 interacts directly with the PSMG1-PSMG2 heterodimer which promotes 20S proteasome assembly. Interacts with HIF1A. Interacts with RAB7A. Interacts with PRKN. Interacts with ABL1 and ABL2. Interacts with EMAP2. Interacts with MAVS.

The protein resides in the cytoplasm. Its subcellular location is the nucleus. Its function is as follows. Component of the 20S core proteasome complex involved in the proteolytic degradation of most intracellular proteins. This complex plays numerous essential roles within the cell by associating with different regulatory particles. Associated with two 19S regulatory particles, forms the 26S proteasome and thus participates in the ATP-dependent degradation of ubiquitinated proteins. The 26S proteasome plays a key role in the maintenance of protein homeostasis by removing misfolded or damaged proteins that could impair cellular functions, and by removing proteins whose functions are no longer required. Associated with the PA200 or PA28, the 20S proteasome mediates ubiquitin-independent protein degradation. This type of proteolysis is required in several pathways including spermatogenesis (20S-PA200 complex) or generation of a subset of MHC class I-presented antigenic peptides (20S-PA28 complex). Inhibits the transactivation function of HIF-1A under both normoxic and hypoxia-mimicking conditions. The interaction with EMAP2 increases the proteasome-mediated HIF-1A degradation under the hypoxic conditions. Plays a role in hepatitis C virus internal ribosome entry site-mediated translation. Mediates nuclear translocation of the androgen receptor (AR) and thereby enhances androgen-mediated transactivation. Promotes MAVS degradation and thereby negatively regulates MAVS-mediated innate immune response. The sequence is that of Proteasome subunit alpha type-7-like (PSMA7L) from Macaca fascicularis (Crab-eating macaque).